A 365-amino-acid polypeptide reads, in one-letter code: MARYWPEPAHTHGTPERTGILLVNLGTPAAPTAAAVRPYLKEFLSDPRVVEIPRAIWWPILNGVILNLRPKKSAEKYAAIWSDAGSPLKVHTERQAKLLAGYLGHAGVTSVVVDWAMRYGAPSISDILGRMKAEGCSRILVVPLYPQYAASTTASVIDEVAGCLTRWRNLPEIRYVRNFHDHPGYVGALARSVRDHWAKHGEPDQLVMSFHGIPKRSLDLGDPYHCECHVTARLLAAKLDLPPERWQLTFQSRFGKAEWLKPYTQPTLEALGRKGTGRVDVICPGFASDCLETLEEIALECRTAFLGAGGKAFHYIPCLNERHDWIAALTDIVRSRIGDWLEAPVPAAELLAATAQRARTAGAER.

Fe cation contacts are provided by His-211 and Glu-292.

This sequence belongs to the ferrochelatase family.

The protein localises to the cytoplasm. The enzyme catalyses heme b + 2 H(+) = protoporphyrin IX + Fe(2+). It functions in the pathway porphyrin-containing compound metabolism; protoheme biosynthesis; protoheme from protoporphyrin-IX: step 1/1. Functionally, catalyzes the ferrous insertion into protoporphyrin IX. The sequence is that of Ferrochelatase from Aromatoleum aromaticum (strain DSM 19018 / LMG 30748 / EbN1) (Azoarcus sp. (strain EbN1)).